A 416-amino-acid chain; its full sequence is Serine hydroxymethyltransferase (416 aa).

Residues Leu118 and 122 to 124 (GHL) contribute to the (6S)-5,6,7,8-tetrahydrofolate site. At Lys226 the chain carries N6-(pyridoxal phosphate)lysine. 350–352 (SPF) lines the (6S)-5,6,7,8-tetrahydrofolate pocket.

It belongs to the SHMT family. Homodimer. It depends on pyridoxal 5'-phosphate as a cofactor.

The protein resides in the cytoplasm. It catalyses the reaction (6R)-5,10-methylene-5,6,7,8-tetrahydrofolate + glycine + H2O = (6S)-5,6,7,8-tetrahydrofolate + L-serine. Its pathway is one-carbon metabolism; tetrahydrofolate interconversion. The protein operates within amino-acid biosynthesis; glycine biosynthesis; glycine from L-serine: step 1/1. In terms of biological role, catalyzes the reversible interconversion of serine and glycine with tetrahydrofolate (THF) serving as the one-carbon carrier. This reaction serves as the major source of one-carbon groups required for the biosynthesis of purines, thymidylate, methionine, and other important biomolecules. Also exhibits THF-independent aldolase activity toward beta-hydroxyamino acids, producing glycine and aldehydes, via a retro-aldol mechanism. The chain is Serine hydroxymethyltransferase from Sulfurovum sp. (strain NBC37-1).